Consider the following 3010-residue polypeptide: MSTNPKPQRKTKRNTYRRPQDVKFPGGGQIVGGVYVLPRRGPTLGVRATRKTSERSQPRGRRQPIPKARRPEGRAWAQPGYPWPLYGNEGLGWAGWLLSPRGSRPSWGPTDPRRRSRNLGKVIDTLTCGFADLMGYIPLVGAPLGGAARALAHGVRVLEDGVNYATGNLPGCSFSIFLLALLSCLTIPASAYQVRNASGLYHVTNDCSNSSIVYEAAGMIMHTPGCVPCVRENNASRCWVALTPTLAARNTSIPTTTIRRHVDLLVGAAAFCSAMYVGDLCGSVFLVSQLFTFSPRRYETVQDCNCSIYPGHVSGHRMAWDMMMNWSPTTALVVSQLLRIPQAVVDMVAGAHWGVLAGLAYYSMVGNWAKVLIVMLLFAGVDGVTYTTGGSQARHTQSVTSFFTQGPAQRIQLINTNGSWHINRTALNCNESLNTGFFAALFYAHKFNSSGCPERMASCSSIDKFAQGWGPITYTEPRDLDQRPYCWHYAPRQCGIVPASQVCGPVYCFTPSPVVVGTTDRSGAPTYNWGANETDVLLLNNTRPPQGNWFGCTWMNSTGFTKTCGGPPCNIGGVGNLTLTCPTDCFRKHPEATYTKCGSGPWLTPRCIVDYPYRLWHYPCTVNFTIFKVRMYVGGVEHRLSAACNWTRGERCDLEDRDRSELSPLLLSTTEWQTLPCSFTTLPALSTGLIHLHQNIVDVQYLYGIGSAVVSFVIKWEYIVLLFLLLADARVCACLWMMLLIAQAEAALENLVVLNAASLAGADGILSFLVFFCAAWYIKGRLVPGAAYALYGVWPLLLLLLALPPRAYAMDREMAASCGGVVFVGLILLTLSPHYKVFLARLIWWLQYFITRAEAHLCVWVPPLNVRGGRDAIILLTCAAHPELIFDITKLLLAILGPLMVLQAAITAMPYFVRAQGLIRACMLVRKVAGGHYVQMAFMKLAALTGTYVYDHLTPLQDWAHAGLRDLAVAVEPVVFSDMETKIITWGADTAACGDIILGLPVSARRGREILLGPADSIEGQGWRLLAPITAYAQQTRGLLGCIVTSLTGRDKNQVEGEVQVVSTATQSFLATCVNGVCWTVFHGAGSKTLAGPKGPITQMYTNVDQDLVGWHAPPGARSLTPCTCGSSDLYLVTRHADVIPVRRRGDGRGSLLSPRPVSYLKGSSGGPLLCPSGHAVGIFRAAVCTRGVAKAVDFIPVESMETTMRSPVFTDNSSPPAVPQTFQVAHLHAPTGSGKSTKVPAAYAAQGYKVLVLNPSVAATLGFGAYMSKAHGTDPNIRTGVRTITTGAPITYSTYGKFLADGGCSGGAYDIIICDECHSTDSTTILGIGTVLDQAETAGARLVVLATATPPGSVTVPHPNIEEVALSNTGEIPFYGKAIPLEAIKGGRHLIFCHSKKKCDELAAKLSGLGINAVAYYRGLDVSVIPTSGDVVIVATDALMTGYTGDFDSVIDCNTCVTQTVDFSLDPTFTIETTTVPQDAVSRSQRRGRTGRGRGGIYRFVTPGERPSGMFDSSVLCECYDAGCAWYELTPAETTVRLRAYLNTPGLPVCQDHLEFWESVFTGLTHIDAHFLSQTKQAGDNFPYLVAYQATVCARAQAPPPSWDQMWKCLIRLKPTLHGPTPLLYRLGAVQNEITLTHPITKFIMACMSADLEVVTSTWVLVGGVLAALAAYCLTTGSVVIVGRIILSGRPAVVPDREVLYREFDEMEECASHLPYIEQGMQLAEQFKQKALGLLQTATKQAEAAAPVVESRWRALEAFWAKHMWNFISGIQYLAGLSTLPGNPAIASLMAFTASITSPLTTQNTLLFNILGGWVAAQLAPPSAASAFVGAGIAGAAIGSIGLGKVLVDILAGYGAGVAGALVAFKVMSGEAPSAEDLVNLLPAILSPGALVVGVVCAAILRRHVGPGEGAVQWMNRLIAFASRGNHVSPTHYVPESDAAARVTQILSSLTITQLLKRLHQWINEDCSTPCSGSWLKDVWDWICTVLTDFKTWLQSKLLPKLPGVPFFSCQRGYKGVWRGDGIMQTTCPCGAQITGHVKNGSMRIVGPKTCSNTWHGTFPINAYTTGPCTPSPAPNYSRALWRVAAEEYVEITRVGDFHYVTGMTTDNVKCPCQVPAPEFFTELDGVRLHRYAPACRPLLREDVTFQVGLNQYLVGSQLPCEPEPDVAVLTSMLTDPSHITAETAKRRLARGSPPSLASSSASQLSAPSLKATCTTHHDSPDADLIEANLLWRQEMGGNITRVESENKVVILDSFDPLRAEEDEREVSVAAEILRKSKKFPPALPIWARPDYNPPLLESWKSPDYVPPAVHGCPLPPTTGPPIPPPRKKRTVVLTESTVSSALAELATKTFGSSGSSAVDSGTATAPPDQTSDDGDKESDVESYSSMPPLEGEPGDPDLSDGSWSTVSGEASDDIVCCSMSYTWTGALITPCAAEESKLPINALSNSLLRHHNMVYATTSRSASLRQKKVTFDRLQVLDDHYRDVLKEMKAKASTVKAKLLSVEEACKLTPPHSAKSKFGYGAKDVRNLSSKAINHIRSVWKDLLEDTETPIDTTIMAKSEVFCVQPEKGGRKPARLIVFPDLGVRVCEKMALYDVVSTLPQAVMGSSYGFQYSPGQRVEFLVNAWKSKKSPMGFSYDTRCFDSTVTESDIRVEESIYQCCDLAPEARQAIKSLTERLYIGGPLTNSKGQNCGYRRCRASGVLTTSCGNTLTCYLKATAACRAAKLQDCTMLVNGDDLVVICESAGTQEDAASLRVFTEAMTRYSAPPGDPPQPEYDLELITSCSSNVSVAHDASGKRVYYLTRDPTTPLARAAWETARHTPVNSWLGNIIMYAPTLWARMILMTHFFSILLAQEQLEKALDCQIYGACYSIEPLDLPQIIQRLHGLSAFSLHSYSPGEINRVASCLRKLGVPPLRVWRHRARSVRARLLSQGGRAATCGKYLFNWAVRTKLKLTPIPAASQLDLSSWFVAGYSGGDIYHSLSRARPRWFMWCLLLLSVGVGIYLLPNR.

Ser-2 carries the post-translational modification N-acetylserine; by host. The segment at 2-23 is interaction with STAT1; it reads STNPKPQRKTKRNTYRRPQDVK. An interaction with EIF2AK2/PKR region spans residues 2-58; it reads STNPKPQRKTKRNTYRRPQDVKFPGGGQIVGGVYVLPRRGPTLGVRATRKTSERSQP. Positions 2-59 are interaction with DDX3X; that stretch reads STNPKPQRKTKRNTYRRPQDVKFPGGGQIVGGVYVLPRRGPTLGVRATRKTSERSQPR. Positions 2-75 are disordered; that stretch reads STNPKPQRKT…PKARRPEGRA (74 aa). Topologically, residues 2–168 are cytoplasmic; it reads STNPKPQRKT…EDGVNYATGN (167 aa). 2 short sequence motifs (nuclear localization signal) span residues 5–13 and 38–43; these read PKPQRKTKR and PRRGPT. Positions 7 to 16 are enriched in basic residues; that stretch reads PQRKTKRNTY. The residue at position 53 (Ser-53) is a Phosphoserine; by host. Short sequence motifs (nuclear localization signal) lie at residues 58–64 and 66–71; these read PRGRRQP and PKARRP. The span at 58–68 shows a compositional bias: basic residues; that stretch reads PRGRRQPIPKA. Ser-99 is subject to Phosphoserine; by host. Residues 112–152 are important for endoplasmic reticulum and mitochondrial localization; that stretch reads PRRRSRNLGKVIDTLTCGFADLMGYIPLVGAPLGGAARALA. At Ser-116 the chain carries Phosphoserine; by host PKA. Residues 122 to 173 are interaction with APOA2; it reads VIDTLTCGFADLMGYIPLVGAPLGGAARALAHGVRVLEDGVNYATGNLPGCS. Residues 164-167 form an important for lipid droplets localization region; that stretch reads YATG. The chain crosses the membrane as a helical span at residues 169 to 189; the sequence is LPGCSFSIFLLALLSCLTIPA. Positions 178 to 191 are cleaved as a propeptide — ER anchor for the core protein, removed in mature form by host signal peptidase; sequence LLALLSCLTIPASA. Topologically, residues 190–358 are lumenal; sequence SAYQVRNASG…AGAHWGVLAG (169 aa). Asn-196, Asn-209, Asn-234, and Asn-250 each carry an N-linked (GlcNAc...) asparagine; by host glycan. Residues 265–296 are important for fusion; that stretch reads LVGAAAFCSAMYVGDLCGSVFLVSQLFTFSPR. A glycan (N-linked (GlcNAc...) asparagine; by host) is linked at Asn-305. A helical membrane pass occupies residues 359 to 379; the sequence is LAYYSMVGNWAKVLIVMLLFA. The Lumenal portion of the chain corresponds to 380–725; sequence GVDGVTYTTG…WEYIVLLFLL (346 aa). Residues 385-411 are HVR1; sequence TYTTGGSQARHTQSVTSFFTQGPAQRI. N-linked (GlcNAc...) (high mannose) asparagine; by host glycans are attached at residues Asn-417, Asn-423, Asn-430, and Asn-448. Intrachain disulfides connect Cys-429–Cys-552, Cys-452–Cys-459, Cys-486–Cys-494, and Cys-503–Cys-508. Residues 474 to 479 form an HVR2 region; sequence YTEPRD. Residues 480 to 493 form a CD81-binding 1 region; it reads LDQRPYCWHYAPRQ. Asn-532 carries N-linked (GlcNAc...) (high mannose) asparagine; by host glycosylation. Asn-540 carries an N-linked (GlcNAc...) asparagine; by host glycan. Positions 544-551 are CD81-binding 2; the sequence is PPQGNWFG. An N-linked (GlcNAc...) (high mannose) asparagine; by host glycan is attached at Asn-556. Cys-564 and Cys-569 form a disulfide bridge. Asn-576 is a glycosylation site (N-linked (GlcNAc...) (high mannose) asparagine; by host). Disulfide bonds link Cys-581-Cys-585, Cys-597-Cys-620, and Cys-607-Cys-644. N-linked (GlcNAc...) (high mannose) asparagine; by host glycans are attached at residues Asn-623 and Asn-645. A disulfide bridge links Cys-652 with Cys-677. A PKR/eIF2-alpha phosphorylation homology domain (PePHD) region spans residues 660–671; sequence SELSPLLLSTTE. Residues 726–746 form a helical membrane-spanning segment; it reads LADARVCACLWMMLLIAQAEA. The Lumenal portion of the chain corresponds to 747–757; that stretch reads ALENLVVLNAA. The helical transmembrane segment at 758–778 threads the bilayer; the sequence is SLAGADGILSFLVFFCAAWYI. Residues 779 to 781 are Cytoplasmic-facing; that stretch reads KGR. Residues 782–803 traverse the membrane as a helical segment; that stretch reads LVPGAAYALYGVWPLLLLLLAL. Residues 804 to 813 are Lumenal-facing; the sequence is PPRAYAMDRE. The chain crosses the membrane as a helical span at residues 814–834; it reads MAASCGGVVFVGLILLTLSPH. The Cytoplasmic segment spans residues 835 to 838; it reads YKVF. Residues 839–859 form a helical membrane-spanning segment; that stretch reads LARLIWWLQYFITRAEAHLCV. The Lumenal portion of the chain corresponds to 860-881; sequence WVPPLNVRGGRDAIILLTCAAH. A helical transmembrane segment spans residues 882–902; the sequence is PELIFDITKLLLAILGPLMVL. In terms of domain architecture, Peptidase C18 spans 903 to 1026; that stretch reads QAAITAMPYF…SIEGQGWRLL (124 aa). Topologically, residues 903-1657 are cytoplasmic; that stretch reads QAAITAMPYF…CMSADLEVVT (755 aa). Positions 904-1206 are protease NS2-3; that stretch reads AAITAMPYFV…PVESMETTMR (303 aa). Cys-922 carries the S-palmitoyl cysteine; by host lipid modification. The interaction with host SCPS1 stretch occupies residues 929–949; it reads AGGHYVQMAFMKLAALTGTYV. Catalysis depends on for protease NS2 activity; shared with dimeric partner residues His-952, Glu-972, and Cys-993. The Peptidase S29 domain maps to 1027–1208; the sequence is APITAYAQQT…ESMETTMRSP (182 aa). Residues His-1083 and Asp-1107 each act as charge relay system; for serine protease NS3 activity in the active site. Zn(2+) is bound by residues Cys-1123 and Cys-1125. The active-site Charge relay system; for serine protease NS3 activity is the Ser-1165. Positions 1171 and 1175 each coordinate Zn(2+). The region spanning 1217-1369 is the Helicase ATP-binding domain; it reads PAVPQTFQVA…PNIEEVALSN (153 aa). Residue 1230 to 1237 participates in ATP binding; the sequence is APTGSGKS. Mg(2+)-binding residues include Ser-1237 and Glu-1317. Positions 1316-1319 match the DECH box motif; sequence DECH. The RNA-binding stretch occupies residues 1486-1497; it reads QRRGRTGRGRGG. A helical transmembrane segment spans residues 1658–1678; it reads STWVLVGGVLAALAAYCLTTG. The NS3-binding stretch occupies residues 1679 to 1690; it reads SVVIVGRIILSG. Over 1679-1805 the chain is Cytoplasmic; that stretch reads SVVIVGRIIL…SITSPLTTQN (127 aa). The helical transmembrane segment at 1806–1824 threads the bilayer; that stretch reads TLLFNILGGWVAAQLAPPS. Over 1825 to 1828 the chain is Lumenal; sequence AASA. The helical transmembrane segment at 1829–1849 threads the bilayer; it reads FVGAGIAGAAIGSIGLGKVLV. Asp-1850 is a topological domain (cytoplasmic). Residues 1851–1871 traverse the membrane as a helical segment; that stretch reads ILAGYGAGVAGALVAFKVMSG. Topologically, residues 1872–1881 are lumenal; it reads EAPSAEDLVN. The chain crosses the membrane as a helical span at residues 1882-1902; that stretch reads LLPAILSPGALVVGVVCAAIL. Topologically, residues 1903–1972 are cytoplasmic; the sequence is RRHVGPGEGA…WINEDCSTPC (70 aa). Residues Cys-1968 and Cys-1972 are each lipidated (S-palmitoyl cysteine; by host). An intramembrane segment occupies 1973 to 2002; sequence SGSWLKDVWDWICTVLTDFKTWLQSKLLPK. Residues 2003 to 2989 are Cytoplasmic-facing; it reads LPGVPFFSCQ…YHSLSRARPR (987 aa). Zn(2+) contacts are provided by Cys-2011, Cys-2029, Cys-2031, and Cys-2052. The FKBP8-binding stretch occupies residues 2120 to 2208; sequence EFFTELDGVR…ASSSASQLSA (89 aa). The interval 2120–2332 is transcriptional activation; sequence EFFTELDGVR…PIPPPRKKRT (213 aa). The interaction with non-structural protein 4A stretch occupies residues 2135–2139; the sequence is PACRP. Residues 2187–2220 form a disordered region; the sequence is KRRLARGSPPSLASSSASQLSAPSLKATCTTHHD. The tract at residues 2189-2441 is interaction with host SKP2; sequence RLARGSPPSL…PCAAEESKLP (253 aa). A Phosphoserine; by host; in p56 modification is found at Ser-2194. Low complexity predominate over residues 2194 to 2211; sequence SPPSLASSSASQLSAPSL. Phosphoserine; by host; in p58 is present on residues Ser-2197, Ser-2201, Ser-2204, Ser-2207, and Ser-2210. An ISDR region spans residues 2210–2249; the sequence is SLKATCTTHHDSPDADLIEANLLWRQEMGGNITRVESENK. The interval 2210–2275 is interaction with EIF2AK2/PKR; the sequence is SLKATCTTHH…REVSVAAEIL (66 aa). The interval 2249-2306 is NS4B-binding; the sequence is KVVILDSFDPLRAEEDEREVSVAAEILRKSKKFPPALPIWARPDYNPPLLESWKSPDY. The short motif at 2322 to 2325 is the SH3-binding element; that stretch reads PPIP. A Nuclear localization signal motif is present at residues 2326 to 2334; the sequence is PPRKKRTVV. Residue Lys-2350 forms a Glycyl lysine isopeptide (Lys-Gly) (interchain with G-Cter in ubiquitin) linkage. Positions 2351–2371 are enriched in polar residues; it reads TFGSSGSSAVDSGTATAPPDQ. The segment at 2351–2408 is disordered; the sequence is TFGSSGSSAVDSGTATAPPDQTSDDGDKESDVESYSSMPPLEGEPGDPDLSDGSWSTV. Positions 2354–2377 are V3; that stretch reads SSGSSAVDSGTATAPPDQTSDDGD. The segment covering 2372–2382 has biased composition (acidic residues); the sequence is TSDDGDKESDV. Phosphoserine; by host occurs at positions 2448 and 2461. The region spanning 2633–2751 is the RdRp catalytic domain; it reads PMGFSYDTRC…ICESAGTQED (119 aa). Residues Asp-2639, Asp-2737, and Asp-2738 each contribute to the Mg(2+) site. A helical transmembrane segment spans residues 2990-3010; sequence WFMWCLLLLSVGVGIYLLPNR.

Belongs to the hepacivirus polyprotein family. In terms of assembly, homooligomer. Interacts with E1 (via C-terminus). Interacts with the non-structural protein 5A. Interacts (via N-terminus) with host STAT1 (via SH2 domain); this interaction results in decreased STAT1 phosphorylation and ubiquitin-mediated proteasome-dependent STAT1 degradation, leading to decreased IFN-stimulated gene transcription. Interacts with host STAT3; this interaction constitutively activates STAT3. Interacts with host LTBR receptor. Interacts with host TNFRSF1A receptor and possibly induces apoptosis. Interacts with host HNRPK. Interacts with host YWHAE. Interacts with host UBE3A/E6AP. Interacts with host DDX3X. Interacts with host APOA2. Interacts with host RXRA protein. Interacts with host SP110 isoform 3/Sp110b; this interaction sequesters the transcriptional corepressor SP110 away from the nucleus. Interacts with host CREB3 nuclear transcription protein; this interaction triggers cell transformation. Interacts with host ACY3. Interacts with host C1QR1. Interacts with host RBM24; this interaction, which enhances the interaction of the mature core protein with 5'-UTR, may inhibit viral translation and favor replication. Interacts with host EIF2AK2/PKR; this interaction induces the autophosphorylation of EIF2AK2. Part of the viral assembly initiation complex composed of NS2, E1, E2, NS3, NS4A, NS5A and the mature core protein. Forms a heterodimer with envelope glycoprotein E2. Interacts with mature core protein. Interacts with protease NS2. The heterodimer E1/E2 interacts with host CLDN1; this interaction plays a role in viral entry into host cell. Interacts with host SPSB2 (via C-terminus). Part of the viral assembly initiation complex composed of NS2, E1, E2, NS3, NS4A, NS5A and the mature core protein. Interacts with host NEURL3; this interaction prevents E1 binding to glycoprotein E2. As to quaternary structure, forms a heterodimer with envelope glycoprotein E1. Interacts with host CD81 and SCARB1 receptors; these interactions play a role in viral entry into host cell. Interacts with host EIF2AK2/PKR; this interaction inhibits EIF2AK2 and probably allows the virus to evade the innate immune response. Interacts with host CD209/DC-SIGN and CLEC4M/DC-SIGNR. Interact with host SPCS1; this interaction is essential for viral particle assembly. Interacts with protease NS2. The heterodimer E1/E2 interacts with host CLDN1; this interaction plays a role in viral entry into host cell. Part of the viral assembly initiation complex composed of NS2, E1, E2, NS3, NS4A, NS5A and the mature core protein. Interacts with host SLC3A2/4F2hc; the interaction may facilitate viral entry into host cell. Interacts with human PLSCR1. In terms of assembly, homohexamer. Homoheptamer. Interacts with protease NS2. Homodimer. Interacts with host SPCS1; this interaction is essential for viral particle assembly. Interacts with envelope glycoprotein E1. Interacts with envelope glycoprotein E2. Interacts with viroporin p7. Interacts with serine protease/helicase NS3. Part of the replication complex composed of NS2, NS3, NS4A, NS4B, NS5A and the RNA-directed RNA polymerase embedded in an ER-derived membranous web. Part of the viral assembly initiation complex composed of NS2, E1, E2, NS3, NS4A, NS5A and the mature core protein. As to quaternary structure, interacts with protease NS2. Interacts with non-structural protein 4A; this interaction stabilizes the folding of NS3 serine protease. NS3-NS4A interaction is essential for NS3 activation and allows membrane anchorage of the latter. NS3/NS4A complex also prevents phosphorylation of host IRF3, thus preventing the establishment of dsRNA induced antiviral state. Interacts with host MAVS; this interaction leads to the cleavage and inhibition of host MAVS. Interacts with host TICAM1; this interaction leads to the cleavage and inhibition of host TICAM1. Interacts with host TANK-binding kinase/TBK1; this interaction results in the inhibition of the association between TBK1 and IRF3, which leads to the inhibition of IRF3 activation. Interacts with host RBM24. Part of the replication complex composed of NS2, NS3, NS4A, NS4B, NS5A and the RNA-directed RNA polymerase embedded in an ER-derived membranous web. Part of the viral assembly initiation complex composed of NS2, E1, E2, NS3, NS4A, NS5A and the mature core protein. In terms of assembly, interacts with NS3 serine protease; this interaction stabilizes the folding of NS3 serine protease. NS3-NS4A interaction is essential for NS3 activation and allows membrane anchorage of the latter. Interacts with non-structural protein 5A (via N-terminus). Part of the replication complex composed of NS2, NS3, NS4A, NS4B, NS5A and the RNA-directed RNA polymerase embedded in an ER-derived membranous web. Part of the viral assembly initiation complex composed of NS2, E1, E2, NS3, NS4A, NS5A and the mature core protein. Homomultimer. Interacts with non-structural protein NS5A. Interacts with host PLA2G4C; this interaction likely initiates the recruitment of replication complexes to lipid droplets. Interacts with host STING; this interaction disrupts the interaction between STING and TBK1 thereby suppressing the interferon signaling. Part of the replication complex composed of NS2, NS3, NS4A, NS4B, NS5A and the RNA-directed RNA polymerase embedded in an ER-derived membranous web. As to quaternary structure, monomer. Homodimer; dimerization is required for RNA-binding. Interacts with the mature core protein. Interacts (via N-terminus) with non-structural protein 4A. Interacts with non-structural protein 4B. Interacts (via region D2) with RNA-directed RNA polymerase. Part of the viral assembly initiation complex composed of NS2, E1, E2, NS3, NS4A, NS5A and the mature core protein. Part of the replication complex composed of NS2, NS3, NS4A, NS4B, NS5A and the RNA-directed RNA polymerase embedded in an ER-derived membranous web. Interacts with host GRB2. Interacts with host BIN1. Interacts with host PIK3R1. Interacts with host SRCAP. Interacts with host FKBP8. Interacts (via C-terminus) with host VAPB (via MSP domain). Interacts with host EIF2AK2/PKR; this interaction leads to disruption of EIF2AK2 dimerization by NS5A and probably allows the virus to evade the innate immune response. Interacts (via N-terminus) with host PACSIN2 (via N-terminus); this interaction attenuates protein kinase C alpha-mediated phosphorylation of PACSIN2 by disrupting the interaction between PACSIN2 and PRKCA. Interacts (via N-terminus) with host SRC kinase (via SH2 domain). Interacts with most Src-family kinases. Interacts with host IFI27 and SKP2; promotes the ubiquitin-mediated proteasomal degradation of NS5A. Interacts with host GPS2. Interacts with host TNFRSF21; this interaction allows the modulation by the virus of JNK, p38 MAPK, STAT3, and Akt signaling pathways in a DR6-dependent manner. Interacts (via N-terminus) with host CIDEB (via N-terminus); this interaction seems to regulate the association of HCV particles with APOE. Interacts with host CHKA/Choline Kinase-alpha; CHKA bridges host PI4KA and NS5A and potentiates NS5A-stimulated PI4KA activity, which then facilitates the targeting of the ternary complex to the ER for viral replication. Interacts with host SPSB2 (via C-terminus); this interaction targets NS5A for ubiquitination and degradation. Interacts with host RAB18; this interaction may promote the association of NS5A and other replicase components with lipid droplets. Interacts (via region D2) with host PPIA/CYPA; the interaction stimulates RNA-binding ability of NS5A and is dependent on the peptidyl-prolyl cis-trans isomerase activity of PPIA/CYPA. Interacts with host TRIM14; this interaction induces the degradation of NS5A. In terms of assembly, homooligomer. Interacts with non-structural protein 5A. Interacts with host VAPB. Interacts with host PRK2/PKN2. Interacts with host HNRNPA1 and SEPT6; these interactions facilitate viral replication. Part of the replication complex composed of NS2, NS3, NS4A, NS4B, NS5A and the RNA-directed RNA polymerase. Zn(2+) is required as a cofactor. Requires Mg(2+) as cofactor. In terms of processing, specific enzymatic cleavages in vivo yield mature proteins. The structural proteins, core, E1, E2 and p7 are produced by proteolytic processing by host signal peptidases. The core protein precursor is synthesized as a 23 kDa, which is retained in the ER membrane through the hydrophobic signal peptide. Cleavage by the signal peptidase releases the 21 kDa mature core protein. The cleavage of the core protein precursor occurs between aminoacids 176 and 188 but the exact cleavage site is not known. Some degraded forms of the core protein appear as well during the course of infection. The other proteins (p7, NS2, NS3, NS4A, NS4B, NS5A and NS5B) are cleaved by the viral proteases. Autoprocessing between NS2 and NS3 is mediated by the NS2 cysteine protease catalytic domain and regulated by the NS3 N-terminal domain. Phosphorylated by host PKC and PKA. Post-translationally, ubiquitinated; mediated by UBE3A and leading to core protein subsequent proteasomal degradation. In terms of processing, highly N-glycosylated. Palmitoylation is required for NS2/3 autoprocessing and E2 recruitment to membranes. Post-translationally, palmitoylated. This modification may play a role in its polymerization or in protein-protein interactions. In terms of processing, phosphorylated on serines in a basal form termed p56. p58 is a hyperphosphorylated form of p56. p56 and p58 coexist in the cell in roughly equivalent amounts. Hyperphosphorylation is dependent on the presence of NS4A. Host CSNK1A1/CKI-alpha or RPS6KB1 kinases may be responsible for NS5A phosphorylation. Tyrosine phosphorylation is essential for the interaction with host SRC. Post-translationally, ubiquitinated. Ubiquitination, most probably at Lys-2350, mediated by host IFI27 and SKP2 leads to proteasomal degradation, restricting viral infection. Ubiquitination by host TRIM22 leads to interruption of viral replication. In terms of processing, the N-terminus is phosphorylated by host PRK2/PKN2.

It localises to the host endoplasmic reticulum membrane. The protein resides in the host mitochondrion membrane. Its subcellular location is the virion. The protein localises to the host cytoplasm. It is found in the host nucleus. It localises to the host lipid droplet. The protein resides in the virion membrane. Its subcellular location is the host mitochondrion. The protein localises to the host cell membrane. It is found in the host perinuclear region. It carries out the reaction Hydrolysis of four peptide bonds in the viral precursor polyprotein, commonly with Asp or Glu in the P6 position, Cys or Thr in P1 and Ser or Ala in P1'.. The catalysed reaction is a ribonucleoside 5'-triphosphate + H2O = a ribonucleoside 5'-diphosphate + phosphate + H(+). The enzyme catalyses ATP + H2O = ADP + phosphate + H(+). It catalyses the reaction RNA(n) + a ribonucleoside 5'-triphosphate = RNA(n+1) + diphosphate. Inhibited by the antiviral drug hexamethylene amiloride. Inhibition by amantadine appears to be genotype-dependent. Also inhibited by long-alkyl-chain iminosugar derivatives. Its activity is regulated as follows. Activity is up-regulated by PRK2/PKN2-mediated phosphorylation. Its function is as follows. Packages viral RNA to form a viral nucleocapsid, and promotes virion budding. Participates in the viral particle production as a result of its interaction with the non-structural protein 5A. Binds RNA and may function as a RNA chaperone to induce the RNA structural rearrangements taking place during virus replication. Modulates viral translation initiation by interacting with viral IRES and 40S ribosomal subunit. Affects various cell signaling pathways, host immunity and lipid metabolism. Prevents the establishment of cellular antiviral state by blocking the interferon-alpha/beta (IFN-alpha/beta) and IFN-gamma signaling pathways and by blocking the formation of phosphorylated STAT1 and promoting ubiquitin-mediated proteasome-dependent degradation of STAT1. Activates STAT3 leading to cellular transformation. Regulates the activity of cellular genes, including c-myc and c-fos. May repress the promoter of p53, and sequester CREB3 and SP110 isoform 3/Sp110b in the cytoplasm. Represses cell cycle negative regulating factor CDKN1A, thereby interrupting an important check point of normal cell cycle regulation. Targets transcription factors involved in the regulation of inflammatory responses and in the immune response: suppresses TNF-induced NF-kappa-B activation, and activates AP-1. Binds to dendritic cells (DCs) via C1QR1, resulting in down-regulation of T-lymphocytes proliferation. Alters lipid metabolism by interacting with hepatocellular proteins involved in lipid accumulation and storage. Induces up-regulation of FAS promoter activity, and thereby contributes to the increased triglyceride accumulation in hepatocytes (steatosis). In terms of biological role, forms a heterodimer with envelope glycoprotein E2, which mediates virus attachment to the host cell, virion internalization through clathrin-dependent endocytosis and fusion with host membrane. Fusion with the host cell is most likely mediated by both E1 and E2, through conformational rearrangements of the heterodimer required for fusion rather than a classical class II fusion mechanism. E1/E2 heterodimer binds host apolipoproteins such as APOB and ApoE thereby forming a lipo-viro-particle (LVP). APOE associated to the LVP allows the initial virus attachment to cell surface receptors such as the heparan sulfate proteoglycans (HSPGs), syndecan-1 (SDC1), syndecan-1 (SDC2), the low-density lipoprotein receptor (LDLR) and scavenger receptor class B type I (SCARB1). The cholesterol transfer activity of SCARB1 allows E2 exposure and binding of E2 to SCARB1 and the tetraspanin CD81. E1/E2 heterodimer binding on CD81 activates the epithelial growth factor receptor (EGFR) signaling pathway. Diffusion of the complex E1-E2-EGFR-SCARB1-CD81 to the cell lateral membrane allows further interaction with Claudin 1 (CLDN1) and occludin (OCLN) to finally trigger HCV entry. Forms a heterodimer with envelope glycoprotein E1, which mediates virus attachment to the host cell, virion internalization through clathrin-dependent endocytosis and fusion with host membrane. Fusion with the host cell is most likely mediated by both E1 and E2, through conformational rearrangements of the heterodimer required for fusion rather than a classical class II fusion mechanism. The interaction between envelope glycoprotein E2 and host apolipoprotein E/APOE allows the proper assembly, maturation and infectivity of the viral particles. This interaction is probably promoted via the up-regulation of cellular autophagy by the virus. E1/E2 heterodimer binds host apolipoproteins such as APOB and APOE thereby forming a lipo-viro-particle (LVP). APOE associated to the LVP allows the initial virus attachment to cell surface receptors such as the heparan sulfate proteoglycans (HSPGs), syndecan-1 (SDC1), syndecan-1 (SDC2), the low-density lipoprotein receptor (LDLR) and scavenger receptor class B type I (SCARB1). The cholesterol transfer activity of SCARB1 allows E2 exposure and binding of E2 to SCARB1 and the tetraspanin CD81. E1/E2 heterodimer binding on CD81 activates the epithelial growth factor receptor (EGFR) signaling pathway. Diffusion of the complex E1-E2-EGFR-SCARB1-CD81 to the cell lateral membrane allows further interaction with Claudin 1 (CLDN1) and occludin (OCLN) to finally trigger HCV entry. Inhibits host EIF2AK2/PKR activation, preventing the establishment of an antiviral state. Viral ligand for CD209/DC-SIGN and CLEC4M/DC-SIGNR, which are respectively found on dendritic cells (DCs), and on liver sinusoidal endothelial cells and macrophage-like cells of lymph node sinuses. These interactions allow the capture of circulating HCV particles by these cells and subsequent facilitated transmission to permissive cells such as hepatocytes and lymphocyte subpopulations. The interaction between E2 and host amino acid transporter complex formed by SLC3A2 and SLC7A5/LAT1 may facilitate viral entry into host cell. Functionally, ion channel protein that acts as a viroporin and plays an essential role in the assembly, envelopment and secretion of viral particles. Regulates the host cell secretory pathway, which induces the intracellular retention of viral glycoproteins and favors assembly of viral particles. Creates a pore in acidic organelles and releases Ca(2+) and H(+) in the cytoplasm of infected cells, leading to a productive viral infection. High levels of cytoplasmic Ca(2+) may trigger membrane trafficking and transport of viral ER-associated proteins to viroplasms, sites of viral genome replication. This ionic imbalance induces the assembly of the inflammasome complex, which triggers the maturation of pro-IL-1beta into IL-1beta through the action of caspase-1. Targets also host mitochondria and induces mitochondrial depolarization. In addition of its role as a viroporin, acts as a lipid raft adhesion factor. Its function is as follows. Cysteine protease required for the proteolytic auto-cleavage between the non-structural proteins NS2 and NS3. The N-terminus of NS3 is required for the function of NS2 protease (active region NS2-3). Promotes the initiation of viral particle assembly by mediating the interaction between structural and non-structural proteins. In terms of biological role, displays three enzymatic activities: serine protease with a chymotrypsin-like fold, NTPase and RNA helicase. NS3 serine protease, in association with NS4A, is responsible for the cleavages of NS3-NS4A, NS4A-NS4B, NS4B-NS5A and NS5A-NS5B. The NS3/NS4A complex prevents phosphorylation of host IRF3, thus preventing the establishment of dsRNA induced antiviral state. The NS3/NS4A complex induces host amino acid transporter component SLC3A2, thus contributing to HCV propagation. NS3 RNA helicase binds to RNA and unwinds both dsDNA and dsRNA in the 3' to 5' direction, and likely resolves RNA complicated stable secondary structures in the template strand. Binds a single ATP and catalyzes the unzipping of a single base pair of dsRNA. Inhibits host antiviral proteins TBK1 and IRF3 thereby preventing the establishment of an antiviral state. Cleaves host MAVS/CARDIF thereby preventing the establishment of an antiviral state. Cleaves host TICAM1/TRIF, thereby disrupting TLR3 signaling and preventing the establishment of an antiviral state. Induces a specific membrane alteration that serves as a scaffold for the virus replication complex. This membrane alteration gives rise to the so-called ER-derived membranous web that contains the replication complex. NS4B self-interaction contributes to its function in membranous web formation. Promotes host TRIF protein degradation in a CASP8-dependent manner thereby inhibiting host TLR3-mediated interferon signaling. Disrupts the interaction between STING and TBK1 contributing to the inhibition of interferon signaling. Functionally, phosphorylated protein that is indispensable for viral replication and assembly. Both hypo- and hyperphosphorylated states are required for the viral life cycle. The hyperphosphorylated form of NS5A is an inhibitor of viral replication. Involved in RNA-binding and especially in binding to the viral genome. Zinc is essential for RNA-binding. Participates in the viral particle production as a result of its interaction with the mature viral core protein. Its interaction with host VAPB may target the viral replication complex to vesicles. Down-regulates viral IRES translation initiation. Mediates interferon resistance, presumably by interacting with and inhibiting host EIF2AK2/PKR. Prevents BIN1-induced apoptosis. Acts as a transcriptional activator of some host genes important for viral replication when localized in the nucleus. Via the interaction with host PACSIN2, modulates lipid droplet formation in order to promote virion assembly. Modulates TNFRSF21/DR6 signaling pathway for viral propagation. Its function is as follows. RNA-dependent RNA polymerase that performs primer-template recognition and RNA synthesis during viral replication. Initiates RNA transcription/replication at a flavin adenine dinucleotide (FAD), resulting in a 5'- FAD cap on viral RNAs. In this way, recognition of viral 5' RNA by host pattern recognition receptors can be bypassed, thereby evading activation of antiviral pathways. In terms of biological role, peptide cofactor which forms a non-covalent complex with the N-terminal of NS3 serine protease. The NS3/NS4A complex prevents phosphorylation of host IRF3, thus preventing the establishment of dsRNA induced antiviral state. The NS3/NS4A complex induces host amino acid transporter component SLC3A2, thus contributing to HCV propagation. In Homo sapiens (Human), this protein is Genome polyprotein.